The following is a 1010-amino-acid chain: Lethal(2) giant larvae protein homolog SRO77 (1010 aa).

WD repeat units lie at residues 47-80, 87-122, 127-163, 182-215, 240-275, 299-364, 372-407, 431-504, 518-595, 602-637, 649-700, 709-763, 768-815, and 829-852; these read TVTT…VVFT, IKHM…TTVF, ITCI…KLKI, SIQW…KQHF, VIQS…IHAR, AIFK…QKLF, LINF…ETLI, VTTC…FEVN, KNIS…STVI, VSAI…FNEN, VSTV…DATK, GINS…THAL, IATS…KNLR, and SILE…SVLN. Residues 932-958 are disordered; the sequence is SNAARKLPPGTEDHRYARPVRSSGRSN.

The protein belongs to the WD repeat L(2)GL family. In terms of assembly, interacts with SEC9.

Acts as an allosteric regulator of polarized exocytosis by promoting the targeted fusion of vesicles with the plasma membrane. Involved in maintenance of ion homeostasis in cells exposed to NaCl stress. May be involved in the targeting of the myosin proteins to their intrinsic pathways. Multicopy suppressor of RHO3. May also participate in the maintenance of cell polarity and bud growth. The sequence is that of Lethal(2) giant larvae protein homolog SRO77 (SRO77) from Saccharomyces cerevisiae (strain ATCC 204508 / S288c) (Baker's yeast).